The sequence spans 152 residues: Large ribosomal subunit protein eL32 (152 aa).

It belongs to the eukaryotic ribosomal protein eL32 family.

In Pyrobaculum aerophilum (strain ATCC 51768 / DSM 7523 / JCM 9630 / CIP 104966 / NBRC 100827 / IM2), this protein is Large ribosomal subunit protein eL32 (rpl32e).